Reading from the N-terminus, the 768-residue chain is MASPSSLLFGEAVILPVYDLDAQQQQRCAKGGRMEARELLSLQIDIFSCLALNRSLGGVTANLDALDAALRPEPIFYTCRAVRRLLLGACWYPVVVENEEGEGEGEREVDEAAAKEEPGNNRIGTVPGEAYEGAGLIITSDGMYINKKIQTHSYLHTIYSLESTDNAREEWRCRARAVFCHSLSLTLINPQLMFRIISRYLSINQFEECFSSFVEGVARDRALRATCTRNYFALLGHLKSPAPPLYSPPASSARAHELHAHGVLSFVADWPDLEALAPLRAKIAENLVAFPQTLASLCALPYCREVSLEAEGFHENQALVSMAMPYLKVAVYKKDPGARPGRVVAREGGGVERWYVYPPRMAVYRITMCLAAMGPGARHVPSEAPRPSSEGPGLPHALVSLLNRGKYAPRETRATMTLPLGLREGALFEPGERRRPLADSFAPVSSLSVHGFGINVFNTNMVINTKIACDPRGARYRTVMDIPRLTNNFVIRKYSVKEPSFTVSVFYSDAACASGTAINMNISGDYLSFLYAVGNLKCFMPVRTVFPISVANWNSTLDLQGLENQQLVRRGRSDVFWTTNFPSAVSTQRGSNVSWFKAATATISKVHGPGLVARVYSETAPILTNPRARLNLVKNAIFSTVETRNKAQIQTIHKRFLECLYECASFGRLDVRAVLRLARGGYFDFSKRIISHTKNKHECAVLGYKKCNLIPKILCDKKKVRLDELGRNANFMTFLSSVAHRNRKLKNRMLRHISRTMGLSWKLHLHKN.

Residues 102–125 (EGEGEREVDEAAAKEEPGNNRIGT) are disordered. Positions 104–119 (EGEREVDEAAAKEEPG) are enriched in basic and acidic residues.

This sequence belongs to the herpesviridae UL87 family.

The sequence is that of Gene 24 protein (24) from Equine herpesvirus 2 (strain 86/87) (EHV-2).